Consider the following 135-residue polypeptide: Photosystem II extrinsic protein V (135 aa).

The heme c site is built by C37, C40, H41, and H92.

It belongs to the cytochrome c family. PsbV subfamily. PSII is composed of 1 copy each of membrane proteins PsbA, PsbB, PsbC, PsbD, PsbE, PsbF, PsbH, PsbI, PsbJ, PsbK, PsbL, PsbM, PsbT, PsbX, PsbY, PsbZ, Psb30/Ycf12, peripheral proteins PsbO, CyanoQ (PsbQ), PsbU, PsbV and a large number of cofactors. It forms dimeric complexes. It depends on heme c as a cofactor.

The protein resides in the cellular thylakoid membrane. In terms of biological role, one of the extrinsic, lumenal subunits of photosystem II (PSII). PSII is a light-driven water plastoquinone oxidoreductase, using light energy to abstract electrons from H(2)O, generating a proton gradient subsequently used for ATP formation. The extrinsic proteins stabilize the structure of photosystem II oxygen-evolving complex (OEC), the ion environment of oxygen evolution and protect the OEC against heat-induced inactivation. Low-potential cytochrome c that plays a role in the OEC of PSII. In Microcystis aeruginosa, this protein is Photosystem II extrinsic protein V.